Reading from the N-terminus, the 264-residue chain is Phosphonoacetaldehyde hydrolase (264 aa).

Catalysis depends on D9, which acts as the Nucleophile. Positions 9 and 11 each coordinate Mg(2+). The Schiff-base intermediate with substrate role is filled by K50. Residue D183 coordinates Mg(2+).

The protein belongs to the HAD-like hydrolase superfamily. PhnX family. As to quaternary structure, homodimer. Requires Mg(2+) as cofactor.

It carries out the reaction phosphonoacetaldehyde + H2O = acetaldehyde + phosphate + H(+). In terms of biological role, involved in phosphonate degradation. This is Phosphonoacetaldehyde hydrolase (phnX) from Bacillus cereus.